A 252-amino-acid polypeptide reads, in one-letter code: MTDPFTSDGAKMPPKPFTIEAGRRQVRSFVLRQGRFTSAQQRAFDELWPRFGLEYLGTPRDLAATFGRDTHKVLEIGFGNGAALRFAAQQDPSRDYIGIEVHAPGVGRLLNALEEDGSTHVRLYHHDAVEVLEHEIADGALDEVRIYFPDPWHKKRHNKRRLIQPAFAQLLVRKLRDGGRLHAATDWADYAEQMWDVLDATPGLVNRAGPRGHVERPAWRPQTHFETRGQKLGHGVWDLVYDRDPGVGSGDA.

Residues E75, E100, D127, and D150 each contribute to the S-adenosyl-L-methionine site. D150 is an active-site residue. K154 contacts substrate. The interaction with RNA stretch occupies residues 156–161; that stretch reads RHNKRR. Residues D186 and 223–226 each bind substrate; that span reads THFE.

Belongs to the class I-like SAM-binding methyltransferase superfamily. TrmB family.

The catalysed reaction is guanosine(46) in tRNA + S-adenosyl-L-methionine = N(7)-methylguanosine(46) in tRNA + S-adenosyl-L-homocysteine. The protein operates within tRNA modification; N(7)-methylguanine-tRNA biosynthesis. Its function is as follows. Catalyzes the formation of N(7)-methylguanine at position 46 (m7G46) in tRNA. In Xanthomonas oryzae pv. oryzae (strain MAFF 311018), this protein is tRNA (guanine-N(7)-)-methyltransferase.